The chain runs to 444 residues: Squalene synthase ERG9 (444 aa).

The helical transmembrane segment at 421 to 441 (FNMVLSIILSVLLGFYYIYTL) threads the bilayer.

The protein belongs to the phytoene/squalene synthase family. Mg(2+) serves as cofactor.

Its subcellular location is the endoplasmic reticulum membrane. The protein resides in the microsome. The enzyme catalyses 2 (2E,6E)-farnesyl diphosphate + NADPH + H(+) = squalene + 2 diphosphate + NADP(+). It catalyses the reaction 2 (2E,6E)-farnesyl diphosphate + NADH + H(+) = squalene + 2 diphosphate + NAD(+). It functions in the pathway terpene metabolism; lanosterol biosynthesis; lanosterol from farnesyl diphosphate: step 1/3. Its function is as follows. Squalene synthase; part of the third module of ergosterol biosynthesis pathway that includes the late steps of the pathway. ERG9 produces squalene from 2 farnesyl pyrophosphate moieties. The third module or late pathway involves the ergosterol synthesis itself through consecutive reactions that mainly occur in the endoplasmic reticulum (ER) membrane. Firstly, the squalene synthase ERG9 catalyzes the condensation of 2 farnesyl pyrophosphate moieties to form squalene, which is the precursor of all steroids. Squalene synthase is crucial for balancing the incorporation of farnesyl diphosphate (FPP) into sterol and nonsterol isoprene synthesis. Secondly, the squalene epoxidase ERG1 catalyzes the stereospecific oxidation of squalene to (S)-2,3-epoxysqualene, which is considered to be a rate-limiting enzyme in steroid biosynthesis. Then, the lanosterol synthase ERG7 catalyzes the cyclization of (S)-2,3 oxidosqualene to lanosterol, a reaction that forms the sterol core. In the next steps, lanosterol is transformed to zymosterol through a complex process involving various demethylation, reduction and desaturation reactions. The lanosterol 14-alpha-demethylase ERG11 (also known as CYP51) catalyzes C14-demethylation of lanosterol to produce 4,4'-dimethyl cholesta-8,14,24-triene-3-beta-ol, which is critical for ergosterol biosynthesis. The C-14 reductase ERG24 reduces the C14=C15 double bond of 4,4-dimethyl-cholesta-8,14,24-trienol to produce 4,4-dimethyl-cholesta-8,24-dienol. 4,4-dimethyl-cholesta-8,24-dienol is substrate of the C-4 demethylation complex ERG25-ERG26-ERG27 in which ERG25 catalyzes the three-step monooxygenation required for the demethylation of 4,4-dimethyl and 4alpha-methylsterols, ERG26 catalyzes the oxidative decarboxylation that results in a reduction of the 3-beta-hydroxy group at the C-3 carbon to an oxo group, and ERG27 is responsible for the reduction of the keto group on the C-3. ERG28 has a role as a scaffold to help anchor ERG25, ERG26 and ERG27 to the endoplasmic reticulum and ERG29 regulates the activity of the iron-containing C4-methylsterol oxidase ERG25. Then, the sterol 24-C-methyltransferase ERG6 catalyzes the methyl transfer from S-adenosyl-methionine to the C-24 of zymosterol to form fecosterol. The C-8 sterol isomerase ERG2 catalyzes the reaction which results in unsaturation at C-7 in the B ring of sterols and thus converts fecosterol to episterol. The sterol-C5-desaturase ERG3 then catalyzes the introduction of a C-5 double bond in the B ring to produce 5-dehydroepisterol. The C-22 sterol desaturase ERG5 further converts 5-dehydroepisterol into ergosta-5,7,22,24(28)-tetraen-3beta-ol by forming the C-22(23) double bond in the sterol side chain. Finally, ergosta-5,7,22,24(28)-tetraen-3beta-ol is substrate of the C-24(28) sterol reductase ERG4 to produce ergosterol. This Saccharomyces cerevisiae (strain ATCC 204508 / S288c) (Baker's yeast) protein is Squalene synthase ERG9.